A 153-amino-acid polypeptide reads, in one-letter code: Nucleoside diphosphate kinase (153 aa).

Alanine 2 bears the N-acetylalanine mark. ATP is bound by residues lysine 13, phenylalanine 61, arginine 89, threonine 95, arginine 106, and asparagine 116. Catalysis depends on histidine 119, which acts as the Pros-phosphohistidine intermediate. The residue at position 126 (serine 126) is a Phosphoserine.

The protein belongs to the NDK family. In terms of assembly, homohexamer. Mg(2+) is required as a cofactor.

The protein resides in the cytoplasm. Its subcellular location is the cytoskeleton. It carries out the reaction a 2'-deoxyribonucleoside 5'-diphosphate + ATP = a 2'-deoxyribonucleoside 5'-triphosphate + ADP. The enzyme catalyses a ribonucleoside 5'-diphosphate + ATP = a ribonucleoside 5'-triphosphate + ADP. Functionally, major role in the synthesis of nucleoside triphosphates other than ATP. The ATP gamma phosphate is transferred to the NDP beta phosphate via a ping-pong mechanism, using a phosphorylated active-site intermediate. This Drosophila melanogaster (Fruit fly) protein is Nucleoside diphosphate kinase (awd).